The sequence spans 206 residues: Recombination protein RecR (206 aa).

A C4-type zinc finger spans residues 60–75 (CARCNTFCEGGLCDIC). Residues 83 to 178 (RRLMVVHMPA…KVSRLSQGIP (96 aa)) form the Toprim domain.

The protein belongs to the RecR family.

In terms of biological role, may play a role in DNA repair. It seems to be involved in an RecBC-independent recombinational process of DNA repair. It may act with RecF and RecO. This is Recombination protein RecR from Neisseria gonorrhoeae (strain NCCP11945).